The chain runs to 248 residues: Pulmonary surfactant-associated protein A (248 aa).

A signal peptide spans 1-20 (MSLCSLAFTLFLTVVAGIKC). Positions 28-100 (GSPGIPGAPG…PGERGLPGFP (73 aa)) constitute a Collagen-like domain. 4-hydroxyproline is present on residues P30, P33, P36, P42, P54, P57, P63, P67, P70, and P76. Residues 31-99 (GIPGAPGNHG…EPGERGLPGF (69 aa)) form a disordered region. Basic and acidic residues predominate over residues 42-51 (PGRDGRDGVK). A compositionally biased stretch (pro residues) spans 54-65 (PGPPGPMGPPGG). Low complexity predominate over residues 69-82 (LPGRDGLPGAPGAP). Basic and acidic residues predominate over residues 84 to 93 (ERGDKGEPGE). A C-type lectin domain is found at 133-248 (SVGDKVFSTN…LQYRLAVCEF (116 aa)). 2 cysteine pairs are disulfide-bonded: C155-C246 and C224-C238. Residue N207 is glycosylated (N-linked (GlcNAc...) asparagine). Ca(2+) contacts are provided by E215, R217, N234, and D235.

This sequence belongs to the SFTPA family. As to quaternary structure, oligomeric complex of 6 set of homotrimers.

The protein localises to the secreted. Its subcellular location is the extracellular space. It is found in the extracellular matrix. It localises to the surface film. In presence of calcium ions, it binds to surfactant phospholipids and contributes to lower the surface tension at the air-liquid interface in the alveoli of the mammalian lung and is essential for normal respiration. Enhances the expression of MYO18A/SP-R210 on alveolar macrophages. In Rattus norvegicus (Rat), this protein is Pulmonary surfactant-associated protein A (Sftpa1).